The sequence spans 359 residues: UPF0283 membrane protein Rleg2_1967 (359 aa).

A disordered region spans residues 1–43 (MSKPPSDPPRRPPAAFTYEDEATERHDNGRQAERRRKPESFSE). The segment covering 23 to 40 (TERHDNGRQAERRRKPES) has biased composition (basic and acidic residues). Helical transmembrane passes span 77-97 (FGKI…GLWT) and 111-131 (LGYL…ALVI).

Belongs to the UPF0283 family.

It localises to the cell inner membrane. In Rhizobium leguminosarum bv. trifolii (strain WSM2304), this protein is UPF0283 membrane protein Rleg2_1967.